The primary structure comprises 140 residues: Bacilliredoxin STH2395 (140 aa).

This sequence belongs to the bacilliredoxin family.

This chain is Bacilliredoxin STH2395, found in Symbiobacterium thermophilum (strain DSM 24528 / JCM 14929 / IAM 14863 / T).